Consider the following 310-residue polypeptide: MIIVTGGAGFIGSNIVKALNDKGITDILVVDNLKDGTKFVNLVDLDIADYMDKEDFLIQIMAGEEFGDVEAIFHEGACSSTTEWDGKYMMDNNYQYSKELLHYCLEREIPFLYASSAATYGGRTSDFIESREYEKPLNVYGYSKFLFDEYVRQILPEANSQIVGFRYFNVYGPREGHKGSMASVAFHLNTQLNNGESPKLFEGSENFKRDFVYVGDVADVNLWFLENGVSGIFNLGTGRAESFQAVADATLAYHKKGQIEYIPFPDKLKGRYQAFTQADLTNLRAAGYDKPFKTVAEGVTEYMAWLNRDA.

NADP(+) is bound by residues 10 to 11 (FI), 31 to 32 (DN), K38, K53, 75 to 79 (EGACS), and N92. Residue Y140 is the Proton acceptor of the active site. K144 provides a ligand contact to NADP(+). Residue N169 coordinates substrate. NADP(+) contacts are provided by V170 and K178. The Proton acceptor role is filled by K178. Residues S180, H187, 201 to 204 (FEGS), and R209 contribute to the substrate site. K267 is subject to N6-acetyllysine. Substrate is bound at residue Y272.

Belongs to the NAD(P)-dependent epimerase/dehydratase family. HldD subfamily. As to quaternary structure, homopentamer. Requires NADP(+) as cofactor.

The enzyme catalyses ADP-D-glycero-beta-D-manno-heptose = ADP-L-glycero-beta-D-manno-heptose. It functions in the pathway nucleotide-sugar biosynthesis; ADP-L-glycero-beta-D-manno-heptose biosynthesis; ADP-L-glycero-beta-D-manno-heptose from D-glycero-beta-D-manno-heptose 7-phosphate: step 4/4. Its function is as follows. Catalyzes the interconversion between ADP-D-glycero-beta-D-manno-heptose and ADP-L-glycero-beta-D-manno-heptose via an epimerization at carbon 6 of the heptose. This chain is ADP-L-glycero-D-manno-heptose-6-epimerase, found in Shigella boydii serotype 18 (strain CDC 3083-94 / BS512).